Reading from the N-terminus, the 343-residue chain is Glycerol-3-phosphate dehydrogenase [NAD(P)+] (343 aa).

S15, F16, R36, and K110 together coordinate NADPH. Sn-glycerol 3-phosphate is bound by residues K110 and G138. A142 provides a ligand contact to NADPH. Sn-glycerol 3-phosphate is bound by residues K193, D246, S256, R257, and N258. Catalysis depends on K193, which acts as the Proton acceptor. R257 contacts NADPH. E283 is a binding site for NADPH.

The protein belongs to the NAD-dependent glycerol-3-phosphate dehydrogenase family.

It localises to the cytoplasm. It carries out the reaction sn-glycerol 3-phosphate + NAD(+) = dihydroxyacetone phosphate + NADH + H(+). The enzyme catalyses sn-glycerol 3-phosphate + NADP(+) = dihydroxyacetone phosphate + NADPH + H(+). It participates in membrane lipid metabolism; glycerophospholipid metabolism. Catalyzes the reduction of the glycolytic intermediate dihydroxyacetone phosphate (DHAP) to sn-glycerol 3-phosphate (G3P), the key precursor for phospholipid synthesis. In Alcanivorax borkumensis (strain ATCC 700651 / DSM 11573 / NCIMB 13689 / SK2), this protein is Glycerol-3-phosphate dehydrogenase [NAD(P)+].